We begin with the raw amino-acid sequence, 271 residues long: NAD kinase (271 aa).

Asp-64 (proton acceptor) is an active-site residue. NAD(+) is bound by residues 64 to 65 (DG), Arg-69, 132 to 133 (NE), Lys-143, Arg-160, Asp-162, 173 to 178 (TAYAMS), Ala-197, and Gln-231.

The protein belongs to the NAD kinase family. It depends on a divalent metal cation as a cofactor.

It is found in the cytoplasm. The catalysed reaction is NAD(+) + ATP = ADP + NADP(+) + H(+). Functionally, involved in the regulation of the intracellular balance of NAD and NADP, and is a key enzyme in the biosynthesis of NADP. Catalyzes specifically the phosphorylation on 2'-hydroxyl of the adenosine moiety of NAD to yield NADP. This chain is NAD kinase, found in Methanocorpusculum labreanum (strain ATCC 43576 / DSM 4855 / Z).